The chain runs to 1004 residues: Caspase recruitment domain-containing protein 14 (1004 aa).

One can recognise a CARD domain in the interval 15–107 (DEETLWEMME…DVYTLVTGLQ (93 aa)). A coiled-coil region spans residues 128–409 (LAGAIGSLQE…RTQLRQLQAE (282 aa)). The tract at residues 409 to 568 (EPPGVLKQEA…RRPARRILSQ (160 aa)) is maintains the protein in an inactive state. The residue at position 544 (Ser544) is a Phosphoserine. The 91-residue stretch at 568–658 (QVTMLAFQGD…FCCLSVKVNT (91 aa)) folds into the PDZ domain. A Guanylate kinase-like domain is found at 807 to 990 (AESCLTLVPY…LLSCVRQAIA (184 aa)).

As to quaternary structure, interacts (via CARD domain) with BCL10 (via CARD domain). Forms a complex with MALT1 and BCL10; resulting in the formation of a CBM (CARD14-BLC10-MALT1) complex. Interacts with TRAF2, TRAF3 and TRAF6. As to expression, isoform 1 is detected in placenta and epidermal keratinocytes. Isoform 2 is detected in leukocytes and fetal brain.

It is found in the cytoplasm. In terms of biological role, acts as a scaffolding protein that can activate the inflammatory transcription factor NF-kappa-B and p38/JNK MAP kinase signaling pathways. Forms a signaling complex with BCL10 and MALT1, and activates MALT1 proteolytic activity and inflammatory gene expression. MALT1 is indispensable for CARD14-induced activation of NF-kappa-B and p38/JNK MAP kinases. May play a role in signaling mediated by TRAF2, TRAF3 and TRAF6 and protects cells against apoptosis. Functionally, not able to activate the inflammatory transcription factor NF-kappa-B and may function as a dominant negative regulator. The sequence is that of Caspase recruitment domain-containing protein 14 (CARD14) from Homo sapiens (Human).